Reading from the N-terminus, the 65-residue chain is Hirudin-3B' (65 aa).

Positions 1–3 (VVY) are interaction with thrombin active site. Cystine bridges form between C6-C14, C16-C28, and C22-C39. The segment at 40–65 (VTGEGTPKPQSHNDGDFEEIPEEYLQ) is disordered. T45 is a glycosylation site (O-linked (GalNAc...) threonine). The interval 55–65 (DFEEIPEEYLQ) is interaction with fibrinogen-binding exosite of thrombin. The segment covering 55–65 (DFEEIPEEYLQ) has biased composition (acidic residues). Sulfotyrosine is present on Y63.

This sequence belongs to the protease inhibitor I14 (hirudin) family.

The protein localises to the secreted. Hirudin is a potent thrombin-specific protease inhibitor. It forms a stable non-covalent complex with alpha-thrombin, thereby abolishing its ability to cleave fibrinogen. The polypeptide is Hirudin-3B' (Hirudo medicinalis (Medicinal leech)).